Reading from the N-terminus, the 710-residue chain is WD repeat-containing protein CG11141 (710 aa).

WD repeat units lie at residues 31-70 (FFPA…MQKL) and 133-172 (LHKC…HLSK). Positions 283–307 (LNPKQRSEPSGTHHTSASTSSTRHS) are disordered. Residues 292–307 (SGTHHTSASTSSTRHS) show a composition bias toward low complexity. Thr-488 carries the post-translational modification Phosphothreonine. The residue at position 553 (Ser-553) is a Phosphoserine. Disordered stretches follow at residues 612–635 (ASIQ…GEPV) and 685–710 (DPLA…FLDN). 2 stretches are compositionally biased toward polar residues: residues 613–624 (SIQTSSRENATN) and 694–704 (PATSDSNTSSE).

The protein belongs to the WD repeat KIAA0329 family.

The protein is WD repeat-containing protein CG11141 of Drosophila melanogaster (Fruit fly).